Here is a 356-residue protein sequence, read N- to C-terminus: Tyrosine recombinase XerS (356 aa).

Residues 16-121 enclose the Core-binding (CB) domain; that stretch reads VMPPYVLEYY…ALSSLYKYLT (106 aa). Residues 169 to 354 enclose the Tyr recombinase domain; sequence GFLDYIDSEY…INEEQKNALD (186 aa). Catalysis depends on residues arginine 210, lysine 234, histidine 306, arginine 309, and histidine 332. Tyrosine 341 (O-(3'-phospho-DNA)-tyrosine intermediate) is an active-site residue.

It belongs to the 'phage' integrase family. XerS subfamily.

Its subcellular location is the cytoplasm. Its activity is regulated as follows. FtsK is required for recombination. In terms of biological role, site-specific tyrosine recombinase, which acts by catalyzing the cutting and rejoining of the recombining DNA molecules. Essential to convert dimers of the bacterial chromosome into monomers to permit their segregation at cell division. The protein is Tyrosine recombinase XerS of Lactococcus lactis subsp. cremoris (strain SK11).